Consider the following 63-residue polypeptide: ATP synthase F(0) complex subunit 8 (63 aa).

The chain crosses the membrane as a helical span at residues 8 to 24; that stretch reads MWLLTILSMLLTLFVLF. The residue at position 57 (lysine 57) is an N6-acetyllysine.

This sequence belongs to the ATPase protein 8 family. In terms of assembly, component of the ATP synthase complex composed at least of ATP5F1A/subunit alpha, ATP5F1B/subunit beta, ATP5MC1/subunit c (homooctomer), MT-ATP6/subunit a, MT-ATP8/subunit 8, ATP5ME/subunit e, ATP5MF/subunit f, ATP5MG/subunit g, ATP5MK/subunit k, ATP5MJ/subunit j, ATP5F1C/subunit gamma, ATP5F1D/subunit delta, ATP5F1E/subunit epsilon, ATP5PF/subunit F6, ATP5PB/subunit b, ATP5PD/subunit d, ATP5PO/subunit OSCP. ATP synthase complex consists of a soluble F(1) head domain (subunits alpha(3) and beta(3)) - the catalytic core - and a membrane F(0) domain - the membrane proton channel (subunits c, a, 8, e, f, g, k and j). These two domains are linked by a central stalk (subunits gamma, delta, and epsilon) rotating inside the F1 region and a stationary peripheral stalk (subunits F6, b, d, and OSCP). Interacts with PRICKLE3.

The protein localises to the mitochondrion membrane. Its function is as follows. Subunit 8, of the mitochondrial membrane ATP synthase complex (F(1)F(0) ATP synthase or Complex V) that produces ATP from ADP in the presence of a proton gradient across the membrane which is generated by electron transport complexes of the respiratory chain. ATP synthase complex consist of a soluble F(1) head domain - the catalytic core - and a membrane F(1) domain - the membrane proton channel. These two domains are linked by a central stalk rotating inside the F(1) region and a stationary peripheral stalk. During catalysis, ATP synthesis in the catalytic domain of F(1) is coupled via a rotary mechanism of the central stalk subunits to proton translocation. In vivo, can only synthesize ATP although its ATP hydrolase activity can be activated artificially in vitro. Part of the complex F(0) domain. The protein is ATP synthase F(0) complex subunit 8 of Balaenoptera physalus (Fin whale).